A 105-amino-acid chain; its full sequence is Prothymosin alpha-A (105 aa).

The span at 1-30 (MADTKVDTSKEVSAKDLKEKKQVEEAENGK) shows a compositional bias: basic and acidic residues. The tract at residues 1 to 105 (MADTKVDTSK…VDPKKQKTDV (105 aa)) is disordered. 2 stretches are compositionally biased toward acidic residues: residues 39–78 (ENEE…EEAE) and 87–96 (EDDDDDEDDV).

This sequence belongs to the pro/parathymosin family. At the 20-somite stage (18 hpf), expressed on the dorsal side of the embryo in the developing central and peripheral nervous system (CNS and PNS), in the tail bud and the pronephric ducts. In the PNS, expressed in the otic vesicle, trigeminal ganglion and the anterior lateral line placode. Localized throughout the hindbrain, with highest expression in rhombomeres 3 and 4. In the head, expressed in the olfactory placode and in the diencephalic region. At the end of the segmentation period (20 hpf), expression begins in the newly forming endodermal pouches, and weakly in the pharyngeal arch precursor cells. During the early pharyngula period, expressed in the pectoral fin bud, the developing retina, and still present in the central nervous system and endodermal pouches. In the tail, expressed in the spinal cord and posterior lateral line precursors. Weakly expressed in the pronephric ducts, only in the corpuscles of Stanius. At 48 hpf, still expressed in the retina and brain, where expression is almost uniform. At this stage, expression is decreased in the spinal cord and is absent from the lateral line cells and pronephric ducts, but appears in the intestine and continues in the pharyngeal arches. In 72 hpf embryos, expression in the brain remains uniform but is restricted to amacrine cells in the retina. In the pharyngeal arches, expression continues to be limited to the ectodermal and endodermal covering cells.

The protein localises to the nucleus. In Danio rerio (Zebrafish), this protein is Prothymosin alpha-A (ptmaa).